A 356-amino-acid chain; its full sequence is DNA polymerase IV (356 aa).

The 182-residue stretch at 6-187 (IIHIDMDYFF…LDIGDFPGVG (182 aa)) folds into the UmuC domain. Residues Asp-10 and Asp-105 each coordinate Mg(2+). Residue Glu-106 is part of the active site.

This sequence belongs to the DNA polymerase type-Y family. In terms of assembly, monomer. Requires Mg(2+) as cofactor.

It is found in the cytoplasm. The enzyme catalyses DNA(n) + a 2'-deoxyribonucleoside 5'-triphosphate = DNA(n+1) + diphosphate. Poorly processive, error-prone DNA polymerase involved in untargeted mutagenesis. Copies undamaged DNA at stalled replication forks, which arise in vivo from mismatched or misaligned primer ends. These misaligned primers can be extended by PolIV. Exhibits no 3'-5' exonuclease (proofreading) activity. May be involved in translesional synthesis, in conjunction with the beta clamp from PolIII. This chain is DNA polymerase IV, found in Staphylococcus aureus (strain JH1).